The chain runs to 332 residues: Malate dehydrogenase, cytoplasmic (332 aa).

NAD(+) is bound by residues 16-17, Asp-43, and Gly-90; that span reads QI. An oxaloacetate-binding site is contributed by Arg-99. NAD(+) is bound by residues Gln-113 and Asn-132. The oxaloacetate site is built by Asn-132, Arg-163, His-188, and Ser-243. Residue His-188 is the Proton acceptor of the active site.

The protein belongs to the LDH/MDH superfamily. MDH type 2 family. In terms of assembly, homodimer.

Its subcellular location is the cytoplasm. It catalyses the reaction (S)-malate + NAD(+) = oxaloacetate + NADH + H(+). This chain is Malate dehydrogenase, cytoplasmic (NR1), found in Beta vulgaris (Sugar beet).